The chain runs to 101 residues: Small ribosomal subunit protein bS18c (101 aa).

Basic residues predominate over residues 1 to 19 (MNKSKRPFTKSKRSFRRRL). The segment at 1 to 20 (MNKSKRPFTKSKRSFRRRLP) is disordered.

Belongs to the bacterial ribosomal protein bS18 family. As to quaternary structure, part of the 30S ribosomal subunit.

It is found in the plastid. The protein localises to the chloroplast. The chain is Small ribosomal subunit protein bS18c from Arabis hirsuta (Hairy rock-cress).